A 333-amino-acid chain; its full sequence is Nucleoid-associated protein HAPS_0704 (333 aa).

It belongs to the YejK family.

It is found in the cytoplasm. It localises to the nucleoid. The chain is Nucleoid-associated protein HAPS_0704 from Glaesserella parasuis serovar 5 (strain SH0165) (Haemophilus parasuis).